The primary structure comprises 412 residues: STAGA complex 65 subunit gamma (412 aa).

The segment at Ala-81 to Pro-107 is disordered. Position 106 is a phosphoserine (Ser-106). Lys-269 is covalently cross-linked (Glycyl lysine isopeptide (Lys-Gly) (interchain with G-Cter in SUMO2)). Phosphoserine is present on residues Ser-321 and Ser-332. The disordered stretch occupies residues Glu-364–Ile-412. Residues Ser-384–Ser-393 show a composition bias toward low complexity.

As to quaternary structure, component of the STAGA transcription coactivator-HAT complex, at least composed of SUPT3H, SUPT7L, GCN5L2, TAF5L, TAF6L, TADA3L, TAD1L, TAF10, TAF12 and TAF9. Sumoylated.

The protein localises to the nucleus. The protein is STAGA complex 65 subunit gamma (Supt7l) of Mus musculus (Mouse).